Consider the following 367-residue polypeptide: Cytochrome b (367 aa).

4 helical membrane-spanning segments follow: residues 25–45, 69–90, 105–125, and 170–190; these read FGSM…FLAI, WIMQ…YIHI, WLSG…GYVL, and FFAL…IHII. Positions 75 and 89 each coordinate heme b. Heme b is bound by residues H174 and H188. H193 contacts a ubiquinone. A run of 4 helical transmembrane segments spans residues 218–238, 280–300, 312–332, and 339–358; these read YKDV…MSFT, LGGT…PFTH, LTQA…WTAT, and FIFI…IINP.

The protein belongs to the cytochrome b family. In terms of assembly, the cytochrome bc1 complex contains 3 respiratory subunits (MT-CYB, CYC1 and UQCRFS1), 2 core proteins (UQCRC1 and UQCRC2) and probably 6 low-molecular weight proteins. It depends on heme b as a cofactor.

The protein resides in the mitochondrion inner membrane. Functionally, component of the ubiquinol-cytochrome c reductase complex (complex III or cytochrome b-c1 complex) that is part of the mitochondrial respiratory chain. The b-c1 complex mediates electron transfer from ubiquinol to cytochrome c. Contributes to the generation of a proton gradient across the mitochondrial membrane that is then used for ATP synthesis. This chain is Cytochrome b (MT-CYB), found in Austrelaps superbus (Lowland copperhead snake).